The primary structure comprises 229 residues: Non-structural protein P8 (229 aa).

Over residues 13-31 (KMKHNQDRVEEPSQVRVDD) the composition is skewed to basic and acidic residues. Residues 13–46 (KMKHNQDRVEEPSQVRVDDTISQPPRYAPSAPMP) form a disordered region. Positions 36–46 (PPRYAPSAPMP) are enriched in low complexity. The next 2 helical transmembrane spans lie at 119 to 139 (IIHT…VCTL) and 162 to 182 (SLNP…MVCA).

Belongs to the orbivirus NS3 family. As to quaternary structure, forms homooligomers via coiled-coil motif. Interacts with host OPTN; this interaction inhibits innate immune response.

The protein resides in the host cell membrane. The protein localises to the host Golgi apparatus. Its function is as follows. Plays a role in the inhibition of host innate immune response. Interacts with host OPTN and thus inhibits the recruitment of TBK1 to the host Golgi apparatus. In turn, downstream partner IRF3 cannot be activated and IFN-beta production is impaired. In terms of biological role, facilitates viral particle release either by increasing plasma membrane permeability through a viroporin-like activity or by viral budding. This Antilocapra americana (Pronghorn) protein is Non-structural protein P8 (Segment-10).